A 780-amino-acid chain; its full sequence is Aconitate hydratase, mitochondrial (780 aa).

The N-terminal 27 residues, 1–27 (MAPYSLLVTRLQKALGVRQYHVASVLC), are a transit peptide targeting the mitochondrion. Lys-31 is subject to N6-succinyllysine. Lys-50 carries the N6-acetyllysine; alternate modification. The residue at position 50 (Lys-50) is an N6-succinyllysine; alternate. Gln-99 is a substrate binding site. Residues Lys-138 and Lys-144 each carry the N6-acetyllysine; alternate modification. N6-succinyllysine; alternate is present on residues Lys-138 and Lys-144. Residue 192-194 (DSH) coordinates substrate. Lys-233 is modified (N6-acetyllysine; alternate). Lys-233 bears the N6-succinyllysine; alternate mark. Cys-385 contacts [4Fe-4S] cluster. At Lys-411 the chain carries N6-succinyllysine. [4Fe-4S] cluster is bound by residues Cys-448 and Cys-451. Residues Arg-474 and Arg-479 each coordinate substrate. Residues Lys-517 and Lys-523 each carry the N6-acetyllysine; alternate modification. Residues Lys-517 and Lys-523 each carry the N6-succinyllysine; alternate modification. Basic and acidic residues predominate over residues 524-537 (LEAPDADELPRSDF). The segment at 524–560 (LEAPDADELPRSDFDPGQDTYQHPPKDSSGQRVDVSP) is disordered. At Lys-549 the chain carries N6-succinyllysine. Over residues 551-560 (SSGQRVDVSP) the composition is skewed to polar residues. At Ser-559 the chain carries Phosphoserine. Lys-573 bears the N6-acetyllysine; alternate mark. Lys-573 bears the N6-succinyllysine; alternate mark. N6-succinyllysine occurs at positions 577 and 591. Lys-605 bears the N6-acetyllysine; alternate mark. Lys-605 carries the N6-succinyllysine; alternate modification. Arg-607 provides a ligand contact to substrate. Lys-628 carries the post-translational modification N6-succinyllysine. Ser-670 carries the phosphoserine modification. 670–671 (SR) is a substrate binding site. At Lys-689 the chain carries N6-succinyllysine. Residues Lys-723 and Lys-730 each carry the N6-acetyllysine; alternate modification. N6-succinyllysine; alternate occurs at positions 723 and 730. Lys-736, Lys-739, and Lys-743 each carry N6-acetyllysine.

Belongs to the aconitase/IPM isomerase family. In terms of assembly, monomer. It depends on [4Fe-4S] cluster as a cofactor. In terms of processing, forms covalent cross-links mediated by transglutaminase TGM2, between a glutamine and the epsilon-amino group of a lysine residue, forming homopolymers and heteropolymers.

Its subcellular location is the mitochondrion. The enzyme catalyses citrate = D-threo-isocitrate. The protein operates within carbohydrate metabolism; tricarboxylic acid cycle; isocitrate from oxaloacetate: step 2/2. Its function is as follows. Catalyzes the isomerization of citrate to isocitrate via cis-aconitate. This Mus musculus (Mouse) protein is Aconitate hydratase, mitochondrial (Aco2).